We begin with the raw amino-acid sequence, 173 residues long: MKLIKFLGGVVFFTLMFSGYSEQNQVNVLCSTDWFMVTVHPFLLNNDVFVHFYEVHLGLGCPPNHIHPHFYQFNYRVTECGIRIKAVSPDVVIYSSEIHYASKGSSARYVIPVSCAAPRRSPWLTKPYSAKAPSSNMGATPKNDTSYHVFTLPEPSQQPNCSCPPYVFNQKSM.

The N-terminal stretch at 1-23 (MKLIKFLGGVVFFTLMFSGYSEQ) is a signal peptide.

It belongs to the PLAC1 family.

It localises to the secreted. May play a role in placental development. The polypeptide is Placenta-specific protein 1 (Rattus norvegicus (Rat)).